A 5065-amino-acid chain; its full sequence is Dynein heavy chain-like protein 1 (5065 aa).

Residues 1–1957 are stem; it reads MELEKTHLIN…IIKMADATFE (1957 aa). A coiled-coil region spans residues 1677–1705; the sequence is QMEGFQKQLDRLSDSLSKIQKALGEYLEK. The tract at residues 1958–2179 is AAA 1; sequence YGYEYLGMCE…LRSLKSVLNS (222 aa). An ATP-binding site is contributed by 1996 to 2003; it reads GPAGTGKT. The disordered stretch occupies residues 2203–2223; sequence FNETLDNNNNNDNNNERKTTT. The span at 2204-2215 shows a compositional bias: low complexity; the sequence is NETLDNNNNNDN. AAA stretches follow at residues 2281-2632, 2751-3004, and 3097-3367; these read NEIH…YEYI, DVDR…WKLA, and IFNE…GNRY. 2319-2326 lines the ATP pocket; the sequence is GDVGTGKS. The segment at 2507–2529 is disordered; the sequence is EKNQNGNENGNENEKKNINIINN. ATP is bound by residues 2790–2797 and 3135–3142; these read GPPGSGKT and GASGAGKT. Residues 3386–3701 form a stalk region; the sequence is IDEKKEEVSS…ETFINLEEAS (316 aa). Coiled-coil stretches lie at residues 3388 to 3466 and 3970 to 3997; these read EKKE…LDEQ and TMEKLKVQGAEASKEVNIAEEVMVEVEN. AAA regions lie at residues 3754–3983 and 4289–4507; these read LSRP…EASK and FNKI…VVDS. Residues 4686–4705 show a composition bias toward basic and acidic residues; it reads KDKNKDEDKNKNKENDDNNK. Residues 4686 to 4727 are disordered; that stretch reads KDKNKDEDKNKNKENDDNNKKHIGNNKLVISSSERTESETSE.

Belongs to the dynein heavy chain family. Consists of at least two heavy chains and a number of intermediate and light chains.

It localises to the cytoplasm. Its subcellular location is the cytoskeleton. Its function is as follows. Acts as a motor for the intracellular retrograde motility of vesicles and organelles along microtubules. Dynein has ATPase activity; the force-producing power stroke is thought to occur on release of ADP. The protein is Dynein heavy chain-like protein 1 of Plasmodium falciparum (isolate 3D7).